The primary structure comprises 347 residues: Merozoite surface protein P12 (347 aa).

The first 25 residues, 1–25 (MIKLSKKYCLGISFVLYILLSVCEG), serve as a signal peptide directing secretion. 6-Cys domains are found at residues 27-172 (KNLT…IPSL) and 175-305 (KVKG…ISSS). The N-linked (GlcNAc...) asparagine glycan is linked to Asn28. Intrachain disulfides connect Cys31-Cys53, Cys67-Cys138, and Cys81-Cys136. N-linked (GlcNAc...) asparagine glycosylation is found at Asn147, Asn200, Asn228, Asn242, Asn265, and Asn322. Disulfide bonds link Cys179–Cys211, Cys225–Cys286, and Cys236–Cys284. Asn322 is lipidated: GPI-anchor amidated asparagine. Residues 323 to 347 (SSFLTLSSYCAFITFIITSFLSFIL) constitute a propeptide, removed in mature form.

In terms of assembly, heterodimer; heterodimerizes with PF41. May form an antiparallel heterodimer with PF41. Post-translationally, processed into a soluble form.

It localises to the cell surface. Its subcellular location is the cell membrane. This chain is Merozoite surface protein P12 (PF12), found in Plasmodium falciparum (isolate 3D7).